Consider the following 1220-residue polypeptide: Protein patched homolog 1 (1220 aa).

The interval 1-27 is disordered; it reads MASDPRDPGPAGGVFGDLPPSYTRSPP. Residues 1–84 lie on the Cytoplasmic side of the membrane; it reads MASDPRDPGP…GCHIQRHCGK (84 aa). Residues 85–105 form a helical membrane-spanning segment; the sequence is VLFIGLLVFGALSVGLRVAAI. Residues 106-419 are Extracellular-facing; the sequence is ETDIEKLWVE…LNDIMKSFSD (314 aa). A glycan (N-linked (GlcNAc...) asparagine) is linked at N397. The helical transmembrane segment at 420–440 threads the bilayer; sequence VSVIRVAGGYLLMLAYACVTM. Positions 421–579 constitute an SSD domain; that stretch reads SVIRVAGGYL…LLIFPAILSL (159 aa). Residues 441-449 are Cytoplasmic-facing; that stretch reads LRWDCAKSQ. The helical transmembrane segment at 450–470 threads the bilayer; the sequence is GAVGLAGVLLVALSVAAGLGL. Residues 471-484 lie on the Extracellular side of the membrane; the sequence is CSLLGLSFNAATTQ. A helical transmembrane segment spans residues 485–505; that stretch reads VLPSLALGIGVDDMFLLGHSF. The Cytoplasmic portion of the chain corresponds to 506 to 528; the sequence is TETRSNIPFKERTGDCLRRTGTS. A helical membrane pass occupies residues 529–549; that stretch reads VALTSVNNMIAFFMAALVPIP. Over 550–558 the chain is Extracellular; the sequence is ALRAFSLQA. A helical transmembrane segment spans residues 559 to 579; that stretch reads AVVVVFNFAMALLIFPAILSL. At 580–739 the chain is on the cytoplasmic side; sequence DLHRREDKRL…APLLLKPETK (160 aa). Residues 740–760 traverse the membrane as a helical segment; sequence TVVVVVFVALLSLSLYGTTMV. The Extracellular segment spans residues 761–1016; the sequence is HDGLYLTDIV…WEQYIGLRHW (256 aa). N-linked (GlcNAc...) asparagine glycans are attached at residues N865 and N888. The helical transmembrane segment at 1017 to 1037 threads the bilayer; sequence FLLSISVVLACTFLVCAILLL. Residues 1038 to 1044 are Cytoplasmic-facing; the sequence is NPWTAGV. Residues 1045–1065 form a helical membrane-spanning segment; it reads IVFILPMMTVELFGIMGLIGI. Residues 1066–1072 lie on the Extracellular side of the membrane; that stretch reads KLSAIPV. Residues 1073–1093 traverse the membrane as a helical segment; sequence VILIASVGIGVEFTVHIALGF. The Cytoplasmic portion of the chain corresponds to 1094 to 1110; it reads LTAIGDRNTRSAVAMEH. A helical membrane pass occupies residues 1111–1131; sequence MFAPVIDGAISTLLGVLMLAG. Residues 1132-1143 are Extracellular-facing; it reads SEFDFIMRYFFA. Residues 1144 to 1164 traverse the membrane as a helical segment; sequence VLAILTLLGILNGLVLLPVLL. Residues 1165–1220 lie on the Cytoplasmic side of the membrane; sequence SLMGPPAEVVPANNANHLQSPSPEPMPPPMNHHGYYAGHIPKASHQAFSETSDSEY.

It belongs to the patched family. Glycosylation is necessary for SHH binding. In terms of tissue distribution, detected in embryonic presomitic mesoderm, neuroectoderm, tissue surrounding the notochord, ventral neural tube.

The protein localises to the membrane. In terms of biological role, acts as a receptor for sonic hedgehog (SHH), indian hedgehog (IHH) and desert hedgehog (DHH). Associates with the smoothened protein (SMO) to transduce the hedgehog's proteins signal. The sequence is that of Protein patched homolog 1 (ptch1) from Danio rerio (Zebrafish).